The chain runs to 84 residues: Sulfur carrier protein TusA (84 aa).

Cys19 functions as the Cysteine persulfide intermediate in the catalytic mechanism.

The protein belongs to the sulfur carrier protein TusA family. Interacts with IscS.

The protein resides in the cytoplasm. The protein operates within tRNA modification. Sulfur carrier protein involved in sulfur trafficking in the cell. Part of a sulfur-relay system required for 2-thiolation during synthesis of 2-thiouridine of the modified wobble base 5-methylaminomethyl-2-thiouridine (mnm(5)s(2)U) in tRNA. Interacts with IscS and stimulates its cysteine desulfurase activity. Accepts an activated sulfur from IscS, which is then transferred to TusD, and thus determines the direction of sulfur flow from IscS to 2-thiouridine formation. Also appears to be involved in sulfur transfer for the biosynthesis of molybdopterin. In Photorhabdus laumondii subsp. laumondii (strain DSM 15139 / CIP 105565 / TT01) (Photorhabdus luminescens subsp. laumondii), this protein is Sulfur carrier protein TusA.